We begin with the raw amino-acid sequence, 328 residues long: MKAFFAISASTLLATVHGHGYLTVPASRTRLGFEAGIDTCPECSILEPVDAWPNVTEAQVGRSGPCGYNARVSVDYNQPGDNWGNEPVVTYKAGDIVEVQWCVDNNGDHGGMFTYGICQDQELVDKFLDPDYLPTEEEKQAAEDCFLQGELKCGDVDGQECEYSPDCGEGEACYRNDWFTCNAFEADSDRGCQGVDGAELNSCKTTIAGGYTVTKKIKIPDYTSEHTLLRFRWNSFQTPQIYLHCADPTIEGGMEVRMRMIVMHGSFGVDTQHSFGHSFGFQGEGVYRAYRYIRGVAIIQMNLNINASLLPQPTLPIRGWSTRNIQHT.

An N-terminal signal peptide occupies residues 1 to 18 (MKAFFAISASTLLATVHG). Cu(2+) is bound at residue His19. A disulfide bridge connects residues Cys40 and Cys43. Asn54 is a glycosylation site (N-linked (GlcNAc...) asparagine). Intrachain disulfides connect Cys66–Cys245, Cys102–Cys203, Cys118–Cys145, Cys153–Cys161, Cys167–Cys173, and Cys181–Cys192. His109 contributes to the Cu(2+) binding site. Tyr242 contributes to the Cu(2+) binding site. N-linked (GlcNAc...) asparagine glycosylation is present at Asn306.

Belongs to the polysaccharide monooxygenase AA13 family. It depends on Cu(2+) as a cofactor.

It localises to the secreted. The catalysed reaction is starch + reduced acceptor + O2 = D-glucono-1,5-lactone-terminated malto-oligosaccharides + short-chain malto-oligosaccharides + acceptor + H2O.. Lytic polysaccharide monooxygenase involved in breakdown of granular resistant starch. In Emericella nidulans (strain FGSC A4 / ATCC 38163 / CBS 112.46 / NRRL 194 / M139) (Aspergillus nidulans), this protein is Lytic polysaccharide monooxygenase aasB.